Here is a 215-residue protein sequence, read N- to C-terminus: Adenylate kinase (215 aa).

10-15 contributes to the ATP binding site; it reads GSGKGT. The tract at residues 30–59 is NMP; sequence STGDILREHVRNGTELGKEAKKYMDAGQLV. Residues Thr31, Arg36, 57-59, 85-88, and Gln92 each bind AMP; these read QLV and GYPR. The interval 126 to 162 is LID; that stretch reads GRRMCKCGRSYHIIFNPPKVPGKCDECGGELYHRDDD. Arg127 is an ATP binding site. Residues Cys130 and Cys132 each contribute to the Zn(2+) site. 135-136 is an ATP binding site; the sequence is SY. 2 residues coordinate Zn(2+): Cys149 and Cys152. Arg159 and Arg170 together coordinate AMP. Residue Gly198 coordinates ATP.

The protein belongs to the adenylate kinase family. As to quaternary structure, monomer.

The protein localises to the cytoplasm. It carries out the reaction AMP + ATP = 2 ADP. Its pathway is purine metabolism; AMP biosynthesis via salvage pathway; AMP from ADP: step 1/1. Functionally, catalyzes the reversible transfer of the terminal phosphate group between ATP and AMP. Plays an important role in cellular energy homeostasis and in adenine nucleotide metabolism. In Methanothrix thermoacetophila (strain DSM 6194 / JCM 14653 / NBRC 101360 / PT) (Methanosaeta thermophila), this protein is Adenylate kinase.